Here is a 431-residue protein sequence, read N- to C-terminus: Serine hydroxymethyltransferase (431 aa).

121 to 123 (AHV) is a binding site for (6S)-5,6,7,8-tetrahydrofolate. An N6-(pyridoxal phosphate)lysine modification is found at Lys227.

This sequence belongs to the SHMT family. In terms of assembly, homodimer. Requires pyridoxal 5'-phosphate as cofactor.

It localises to the cytoplasm. Its pathway is amino-acid biosynthesis; glycine biosynthesis; glycine from L-serine: step 1/1. Catalyzes the reversible interconversion of serine and glycine with a modified folate serving as the one-carbon carrier. Also exhibits a pteridine-independent aldolase activity toward beta-hydroxyamino acids, producing glycine and aldehydes, via a retro-aldol mechanism. The protein is Serine hydroxymethyltransferase of Metallosphaera sedula (strain ATCC 51363 / DSM 5348 / JCM 9185 / NBRC 15509 / TH2).